Here is a 392-residue protein sequence, read N- to C-terminus: Enoyl-[acyl-carrier-protein] reductase [NADH] (392 aa).

Residues 46-51 (GSSSGY), 72-73 (LE), 108-109 (DA), and 136-137 (VA) each bind NAD(+). Y225 is a binding site for substrate. The Proton donor role is filled by Y235. NAD(+)-binding positions include K244 and 273–275 (LVT).

Belongs to the TER reductase family. As to quaternary structure, monomer.

The enzyme catalyses a 2,3-saturated acyl-[ACP] + NAD(+) = a (2E)-enoyl-[ACP] + NADH + H(+). It functions in the pathway lipid metabolism; fatty acid biosynthesis. Functionally, involved in the final reduction of the elongation cycle of fatty acid synthesis (FAS II). Catalyzes the reduction of a carbon-carbon double bond in an enoyl moiety that is covalently linked to an acyl carrier protein (ACP). This Streptomyces avermitilis (strain ATCC 31267 / DSM 46492 / JCM 5070 / NBRC 14893 / NCIMB 12804 / NRRL 8165 / MA-4680) protein is Enoyl-[acyl-carrier-protein] reductase [NADH].